A 412-amino-acid polypeptide reads, in one-letter code: Serine hydroxymethyltransferase (412 aa).

(6S)-5,6,7,8-tetrahydrofolate-binding positions include leucine 114 and 118–120 (GHL). Lysine 223 bears the N6-(pyridoxal phosphate)lysine mark.

This sequence belongs to the SHMT family. As to quaternary structure, homodimer. It depends on pyridoxal 5'-phosphate as a cofactor.

It is found in the cytoplasm. It catalyses the reaction (6R)-5,10-methylene-5,6,7,8-tetrahydrofolate + glycine + H2O = (6S)-5,6,7,8-tetrahydrofolate + L-serine. Its pathway is one-carbon metabolism; tetrahydrofolate interconversion. The protein operates within amino-acid biosynthesis; glycine biosynthesis; glycine from L-serine: step 1/1. Functionally, catalyzes the reversible interconversion of serine and glycine with tetrahydrofolate (THF) serving as the one-carbon carrier. This reaction serves as the major source of one-carbon groups required for the biosynthesis of purines, thymidylate, methionine, and other important biomolecules. Also exhibits THF-independent aldolase activity toward beta-hydroxyamino acids, producing glycine and aldehydes, via a retro-aldol mechanism. This is Serine hydroxymethyltransferase from Mesoplasma florum (strain ATCC 33453 / NBRC 100688 / NCTC 11704 / L1) (Acholeplasma florum).